Consider the following 176-residue polypeptide: Trypsin inhibitor 1B (176 aa).

Intrachain disulfides connect cysteine 39–cysteine 83 and cysteine 132–cysteine 143.

The protein belongs to the protease inhibitor I3 (leguminous Kunitz-type inhibitor) family.

Functionally, inhibits trypsin stoichiometrically. This chain is Trypsin inhibitor 1B, found in Erythrina variegata (Indian coral tree).